The primary structure comprises 40 residues: Large ribosomal subunit protein bL36A (40 aa).

Belongs to the bacterial ribosomal protein bL36 family.

In Saccharopolyspora erythraea (strain ATCC 11635 / DSM 40517 / JCM 4748 / NBRC 13426 / NCIMB 8594 / NRRL 2338), this protein is Large ribosomal subunit protein bL36A.